Consider the following 286-residue polypeptide: 33 kDa chaperonin (286 aa).

2 disulfide bridges follow: Cys225–Cys227 and Cys258–Cys261.

Belongs to the HSP33 family. In terms of processing, under oxidizing conditions two disulfide bonds are formed involving the reactive cysteines. Under reducing conditions zinc is bound to the reactive cysteines and the protein is inactive.

The protein resides in the cytoplasm. Its function is as follows. Redox regulated molecular chaperone. Protects both thermally unfolding and oxidatively damaged proteins from irreversible aggregation. Plays an important role in the bacterial defense system toward oxidative stress. This Shewanella woodyi (strain ATCC 51908 / MS32) protein is 33 kDa chaperonin.